The sequence spans 97 residues: UPF0235 protein DET1292 (97 aa).

The protein belongs to the UPF0235 family.

The polypeptide is UPF0235 protein DET1292 (Dehalococcoides mccartyi (strain ATCC BAA-2266 / KCTC 15142 / 195) (Dehalococcoides ethenogenes (strain 195))).